The chain runs to 318 residues: Large ribosomal subunit protein uL10 (318 aa).

Tyr-24 bears the Phosphotyrosine mark. Phosphothreonine is present on Thr-59. Lys-264 participates in a covalent cross-link: Glycyl lysine isopeptide (Lys-Gly) (interchain with G-Cter in ubiquitin). A Glycyl lysine isopeptide (Lys-Gly) (interchain with G-Cter in SUMO1); alternate cross-link involves residue Lys-298. Lys-298 participates in a covalent cross-link: Glycyl lysine isopeptide (Lys-Gly) (interchain with G-Cter in SUMO2); alternate. Positions 298-318 (KVEAKEESEESDEDMGFGLFD) are disordered. The span at 303–312 (EESEESDEDM) shows a compositional bias: acidic residues. A phosphoserine mark is found at Ser-305 and Ser-308.

This sequence belongs to the universal ribosomal protein uL10 family. In terms of assembly, P0 forms a pentameric complex by interaction with dimers of P1 and P2. Identified in a IGF2BP1-dependent mRNP granule complex containing untranslated mRNAs. Interacts with APEX1. Interacts with FMR1. Post-translationally, ubiquitinated at Lys-264 by RNF14 and RNF25 in response to ribosome collisions (ribosome stalling).

It is found in the nucleus. Its subcellular location is the cytoplasm. Ribosomal protein P0 is the functional equivalent of E.coli protein L10. This is Large ribosomal subunit protein uL10 (RPLP0) from Sus scrofa (Pig).